Here is an 818-residue protein sequence, read N- to C-terminus: H(+)/Cl(-) exchange transporter 3 (818 aa).

The Cytoplasmic segment spans residues 1–125 (MESEQLFHRG…WEMTKSLYDA (125 aa)). Short sequence motifs (di-leucine internalization motif; mediates targeting to late endosome and lysosome membranes) lie at residues 28-29 (LL), 46-47 (LL), and 71-75 (LLDLL). A helical membrane pass occupies residues 126–163 (WSGWLVVTLTGLASGALAGLIDIAADWMTDLKEGICLS). Asparagine 177 is a glycosylation site (N-linked (GlcNAc...) asparagine). A helical transmembrane segment spans residues 209–232 (MNYIMYIFWALSFAFLAVSLVKVF). Residues 238 to 242 (GSGIP) carry the Selectivity filter part_1 motif. Serine 239 provides a ligand contact to chloride. The segment at residues 241-248 (IPEIKTIL) is an intramembrane region (helical). The next 2 helical transmembrane spans lie at 258 to 276 (GKWTLMIKTITLVLAVASG) and 282 to 301 (EGPLVHVACCCGNIFSYLFP). A Selectivity filter part_2 motif is present at residues 280–284 (GKEGP). 2 intramembrane regions (helical) span residues 313–325 (VLSAASAAGVSVA) and 329–337 (PIGGVLFSL). A run of 3 helical transmembrane segments spans residues 349-367 (LWRSFFAALVAAFVLRSIN), 391-416 (FPFILLGVFGGLWGAFFIRANIAWCR), and 423-443 (FGKYPVLEVIIVAAITAVIAF). Residues asparagine 451 and asparagine 479 are each glycosylated (N-linked (GlcNAc...) asparagine). A run of 2 helical transmembrane segments spans residues 500-520 (IWQLCLALIFKIIMTVFTFGI) and 525-544 (GLFIPSMAIGAIAGRIVGIA). The Selectivity filter part_3 motif lies at 525–529 (GLFIP). Residue phenylalanine 527 coordinates chloride. 2 intramembrane regions (helical) span residues 572 to 586 (GLYAMVGAAACLGGV) and 590 to 601 (TVSLVVIVFELT). The note=Loop between two helices intramembrane region spans 602 to 605 (GGLE). Residues 606 to 624 (YIVPLMAAVMTSKWVGDAF) form a helical membrane-spanning segment. Residues 625–818 (GREGIYEAHI…NQDPASIMFN (194 aa)) lie on the Cytoplasmic side of the membrane. Position 630 (tyrosine 630) interacts with chloride. 2 consecutive CBS domains span residues 658–722 (MRPR…ARKK) and 755–812 (LDMS…NQDP). Residues 689–691 (YNG) and 796–799 (TKKD) each bind ATP.

This sequence belongs to the chloride channel (TC 2.A.49) family. ClC-3/CLCN3 subfamily. In terms of assembly, monomer and homodimer. Forms heterodimers with CLCN4. In terms of processing, N-glycosylated. As to expression, abundant in brain, especially in the olfactory bulb, hippocampus, and cerebellum. A moderate expression is seen in the lung, kidney and adrenal gland.

Its subcellular location is the lysosome membrane. It is found in the late endosome membrane. The protein localises to the cell membrane. The protein resides in the early endosome membrane. Its function is as follows. Strongly outwardly rectifying, electrogenic H(+)/Cl(-)exchanger which mediates the exchange of chloride ions against protons. The CLC channel family contains both chloride channels and proton-coupled anion transporters that exchange chloride or another anion for protons. The presence of conserved gating glutamate residues is typical for family members that function as antiporters. Functionally, strongly outwardly rectifying, electrogenic H(+)/Cl(-)exchanger which mediates the exchange of chloride ions against protons. May play an important role in neuronal cell function through regulation of membrane excitability by protein kinase C. It could help neuronal cells to establish short-term memory. This is H(+)/Cl(-) exchange transporter 3 (Clcn3) from Rattus norvegicus (Rat).